We begin with the raw amino-acid sequence, 346 residues long: Phosphoribosylformylglycinamidine cyclo-ligase (346 aa).

This sequence belongs to the AIR synthase family.

The protein localises to the cytoplasm. The catalysed reaction is 2-formamido-N(1)-(5-O-phospho-beta-D-ribosyl)acetamidine + ATP = 5-amino-1-(5-phospho-beta-D-ribosyl)imidazole + ADP + phosphate + H(+). Its pathway is purine metabolism; IMP biosynthesis via de novo pathway; 5-amino-1-(5-phospho-D-ribosyl)imidazole from N(2)-formyl-N(1)-(5-phospho-D-ribosyl)glycinamide: step 2/2. The chain is Phosphoribosylformylglycinamidine cyclo-ligase from Photobacterium profundum (strain SS9).